The following is a 448-amino-acid chain: MAPEIFVKFKCASRDIKLLWASVFLRLLSYGLTNQVLTLFLNAINMTEDKIGLFMSLTLAGDVICSYILTWYADSWGRRRVLVYGCAMMLLSGLVFSFSENFTLLLVFAIFGVISPSSDEVGPFKSIEEAMIAHLSPHNARPEIYAIHALVGTIGSALGAIICGIFVDLLKRTGLAATDLQCYKLVFLLYAFFAFCKMVIMLLLSDATELDGHYEHTDCNEETAEPLDVNDETAPLMRQATHPEERSNKLSKETVSVLMKLLVIFMVDSLGSGFMTSGWMVYYYSKQFLMGSLALGTLFFITQLVMASSTIPSSIIARCFGPVRATLLVQIPSGIFSILIPMAKNYLPLSILFLNLHFATTAMDVTPRQILLTNIIKPRDLTKVMGVVNIGKTFARCVGPIFTGILANNNYLWLCYIISGSLVITADLILACMFLGVDAKIKKQMNRH.

At 1 to 50 (MAPEIFVKFKCASRDIKLLWASVFLRLLSYGLTNQVLTLFLNAINMTEDK) the chain is on the extracellular side. Residues 51–71 (IGLFMSLTLAGDVICSYILTW) form a helical membrane-spanning segment. Topologically, residues 72–93 (YADSWGRRRVLVYGCAMMLLSG) are cytoplasmic. A helical membrane pass occupies residues 94–114 (LVFSFSENFTLLLVFAIFGVI). Residues 115-146 (SPSSDEVGPFKSIEEAMIAHLSPHNARPEIYA) lie on the Extracellular side of the membrane. A helical membrane pass occupies residues 147–167 (IHALVGTIGSALGAIICGIFV). Topologically, residues 168–184 (DLLKRTGLAATDLQCYK) are cytoplasmic. The chain crosses the membrane as a helical span at residues 185 to 205 (LVFLLYAFFAFCKMVIMLLLS). At 206-260 (DATELDGHYEHTDCNEETAEPLDVNDETAPLMRQATHPEERSNKLSKETVSVLMK) the chain is on the extracellular side. Residues 261-281 (LLVIFMVDSLGSGFMTSGWMV) form a helical membrane-spanning segment. Residues 282–287 (YYYSKQ) lie on the Cytoplasmic side of the membrane. The chain crosses the membrane as a helical span at residues 288-308 (FLMGSLALGTLFFITQLVMAS). Residues 309–333 (STIPSSIIARCFGPVRATLLVQIPS) are Extracellular-facing. A helical membrane pass occupies residues 334–354 (GIFSILIPMAKNYLPLSILFL). Topologically, residues 355-386 (NLHFATTAMDVTPRQILLTNIIKPRDLTKVMG) are cytoplasmic. 386 to 393 (GVVNIGKT) contacts ATP. Residues 387 to 407 (VVNIGKTFARCVGPIFTGILA) form a helical membrane-spanning segment. Residues 408 to 416 (NNNYLWLCY) are Extracellular-facing. Residues 417–437 (IISGSLVITADLILACMFLGV) traverse the membrane as a helical segment. Topologically, residues 438-448 (DAKIKKQMNRH) are cytoplasmic.

The protein resides in the membrane. This is an uncharacterized protein from Saccharomyces cerevisiae (strain ATCC 204508 / S288c) (Baker's yeast).